The following is a 941-amino-acid chain: Zinc finger protein 507 (941 aa).

S95 carries the phosphoserine modification. 2 C2H2-type zinc fingers span residues 122 to 144 and 152 to 175; these read YQCS…VKQH and LMCS…VSEH. The span at 165–177 shows a compositional bias: basic and acidic residues; the sequence is QELEAHVVSEHEN. The tract at residues 165–198 is disordered; sequence QELEAHVVSEHENSASSQARSSPSGQGATERKSE. The segment covering 178–192 has biased composition (low complexity); sequence SASSQARSSPSGQGA. The segment at 237–259 adopts a C2H2-type 3 zinc-finger fold; the sequence is YRCLFCSYTCGQQRMLKTHAWKH. S415 carries the phosphoserine modification. The segment at 455-477 is disordered; the sequence is ELSKGLAPDENAPPGRRRTNSES. 5 consecutive C2H2-type zinc fingers follow at residues 630 to 652, 658 to 680, 686 to 709, 746 to 768, and 774 to 796; these read YRCR…LRVH, YQCP…MINH, HQCK…REQH, YRCD…RRVH, and YRCS…MWKH. Residues 823–856 form a disordered region; it reads GKSRGKPLLTSSEERTGPTTGSPENLVSSSELTS. Residues 839 to 856 are compositionally biased toward polar residues; sequence GPTTGSPENLVSSSELTS. A C2H2-type 9 zinc finger spans residues 899 to 921; the sequence is FCCCICGFESTSKESLLDHMKEH.

The protein belongs to the krueppel C2H2-type zinc-finger protein family.

It is found in the nucleus. Its function is as follows. May be involved in transcriptional regulation. The chain is Zinc finger protein 507 (Znf507) from Mus musculus (Mouse).